The primary structure comprises 325 residues: Ribosomal RNA small subunit methyltransferase H (325 aa).

Residues 1-28 are disordered; sequence MTASQPLDQADQDSESSSAGSSAAETEH. The segment covering 15–24 has biased composition (low complexity); that stretch reads ESSSAGSSAA. Residues 56–58, Asp-82, Tyr-110, Asp-131, and Gln-138 each bind S-adenosyl-L-methionine; that span reads GGH. The tract at residues 303–325 is disordered; it reads TDEEVQANPRSRSAKLRVAKRVE. The segment covering 314-325 has biased composition (basic residues); sequence RSAKLRVAKRVE.

It belongs to the methyltransferase superfamily. RsmH family.

Its subcellular location is the cytoplasm. The enzyme catalyses cytidine(1402) in 16S rRNA + S-adenosyl-L-methionine = N(4)-methylcytidine(1402) in 16S rRNA + S-adenosyl-L-homocysteine + H(+). In terms of biological role, specifically methylates the N4 position of cytidine in position 1402 (C1402) of 16S rRNA. The protein is Ribosomal RNA small subunit methyltransferase H of Rhodopirellula baltica (strain DSM 10527 / NCIMB 13988 / SH1).